The chain runs to 327 residues: MKKVSVIMPTFNNGEKLHRTISSVLNQTMKSTDYELIIIDDHSNDNGETLNVIKKYKGLVRFKQLKKNSGNASVPRNTGLKMSKAEYVFFLDSDDLLHERALEDLYNYGKENNSDLIIGKYGVEGKGRSVPKAIFEKGNVAKADIIDNSIFYALSVLKMFKKSVIDKNKIKFKTFSKTAEDQLFTIEFLMNSKNYSIKTDYEYYIVVNDFESSNHLSVNKSTGNQYFATINEIYKAIYKSPIYKNQEKRHQLAGKYTTRLLRHGQKKNFANSKMKYEDKIEWLNNFSKTINKVPRDSDKYVTQIFNLKLEAIRQNDLLAVMIADKLL.

Residues proline 9, aspartate 41, asparagine 68, arginine 76, and 92–94 (DSD) each bind UDP-N-acetyl-alpha-D-glucosamine. Mn(2+) is bound at residue aspartate 94. Catalysis depends on aspartate 181, which acts as the Proton acceptor.

This sequence belongs to the glycosyltransferase 2 family. Homotrimer. The cofactor is Mn(2+).

It catalyses the reaction 4-O-[(D-ribitylphospho)(n)-di{(2R)-glycerylphospho}]-N-acetyl-beta-D-mannosaminyl-(1-&gt;4)-N-acetyl-alpha-D-glucosaminyl di-trans,octa-cis-undecaprenyl diphosphate + n UDP-N-acetyl-alpha-D-glucosamine = 4-O-([3-N-acetyl-beta-D-glucosaminyl-1-D-ribitylphospho](n)-di{[2R]-1-glycerylphospho})-N-acetyl-beta-D-mannosaminyl-(1-&gt;4)-N-acetyl-alpha-D-glucosaminyl di-trans,octa-cis-undecaprenyl diphosphate + n UDP + n H(+). It participates in cell wall biogenesis; poly(ribitol phosphate) teichoic acid biosynthesis. In terms of biological role, attaches beta-O-GlcNAc (beta-O-N-acetyl-D-glucosamine) residues to the C3 position of poly(RboP)-wall teichoic acids (WTAs). Attenuates immunogenicity of WTA and protects S.aureus against adaptative host defenses by allowing bacteria to evade recognition by preexisting anti-S.aureus antibodies. Also protects the cell from podophage infection. This chain is Poly(ribitol-phosphate) beta-N-acetylglucosaminyltransferase TarP, found in Staphylococcus aureus (strain N315).